A 183-amino-acid polypeptide reads, in one-letter code: Adenine phosphoribosyltransferase (183 aa).

The protein belongs to the purine/pyrimidine phosphoribosyltransferase family. As to quaternary structure, homodimer.

The protein localises to the cytoplasm. It carries out the reaction AMP + diphosphate = 5-phospho-alpha-D-ribose 1-diphosphate + adenine. Its pathway is purine metabolism; AMP biosynthesis via salvage pathway; AMP from adenine: step 1/1. Catalyzes a salvage reaction resulting in the formation of AMP, that is energically less costly than de novo synthesis. The chain is Adenine phosphoribosyltransferase from Salmonella gallinarum (strain 287/91 / NCTC 13346).